A 349-amino-acid chain; its full sequence is Hypoxia-inducible factor 1-alpha inhibitor (349 aa).

Over residues 1-14 the composition is skewed to low complexity; the sequence is MAATAAEVAASGSG. Residues 1 to 51 are disordered; that stretch reads MAATAAEVAASGSGEAREEAEAPGPAWDESQLRSYSFPTRPIPRLSQSDPR. An N-acetylalanine modification is found at A2. The tract at residues 2 to 125 is interaction with VHL; the sequence is AATAAEVAAS…PRSNREEIKF (124 aa). One can recognise a JmjC domain in the interval 142-307; sequence ERLYLQQTLN…KGAPTPKRIE (166 aa). 2-oxoglutarate is bound at residue Y145. Substrate contacts are provided by residues D152 and 181–183; that span reads QLT. Residue T196 coordinates 2-oxoglutarate. Residues H199 and D201 each contribute to the Fe cation site. 201–203 serves as a coordination point for substrate; the sequence is DEQ. 2-oxoglutarate-binding residues include N205 and K214. 238–239 contacts substrate; the sequence is RQ. H279 is a Fe cation binding site. Position 294 (N294) interacts with 2-oxoglutarate. Substrate is bound by residues A300 and N321.

Homodimer; homodimerization is essential for catalytic activity. Interacts with VHL and HIF1A. Part of a complex with VHL, HIF1A and HDAC1 or HDAC2 or HDAC3. Interacts with NFKB1 and NFKBIA. Interacts with NOTCH1, NOTCH2 and NOTCH3 but not with NOTCH4. Interacts with ABPA3. Interacts with TNKS2. Interacts with PPP1R12A. Interacts with UBE3A. Interacts with ASB4. Interacts with ANKS3. Interacts with NECAB3; the interaction is indirect and seems to be mediated by APBA3. It depends on Fe(2+) as a cofactor.

The protein resides in the nucleus. Its subcellular location is the cytoplasm. It localises to the perinuclear region. The enzyme catalyses L-asparaginyl-[hypoxia-inducible factor alpha subunit] + 2-oxoglutarate + O2 = (3S)-3-hydroxy-L-asparaginyl-[hypoxia-inducible factor alpha subunit] + succinate + CO2. It carries out the reaction L-histidyl-[ankyrin-repeat domain protein] + 2-oxoglutarate + O2 = (3S)-3-hydroxy-L-histidyl-[ankyrin-repeat domain protein] + succinate + CO2. It catalyses the reaction L-asparaginyl-[ankyrin-repeat domain protein] + 2-oxoglutarate + O2 = (3S)-3-hydroxy-L-asparaginyl-[ankyrin-repeat domain protein] + succinate + CO2. The catalysed reaction is L-aspartyl-[ankyrin-repeat domain protein] + 2-oxoglutarate + O2 = (3S)-3-hydroxy-L-aspartyl-[ankyrin-repeat domain protein] + succinate + CO2. Its function is as follows. Hydroxylates HIF-1 alpha at 'Asn-799' in the C-terminal transactivation domain (CAD). Functions as an oxygen sensor and, under normoxic conditions, the hydroxylation prevents interaction of HIF-1 with transcriptional coactivators including Cbp/p300-interacting transactivator. Involved in transcriptional repression through interaction with HIF1A, VHL and histone deacetylases. Hydroxylates specific Asn residues within ankyrin repeat domains (ARD) of NFKB1, NFKBIA, NOTCH1, ASB4, PPP1R12A and several other ARD-containing proteins. Also hydroxylates Asp and His residues within ARDs of ANK1 and TNKS2, respectively. Negatively regulates NOTCH1 activity, accelerating myogenic differentiation. Positively regulates ASB4 activity, promoting vascular differentiation. This is Hypoxia-inducible factor 1-alpha inhibitor (Hif1an) from Mus musculus (Mouse).